The chain runs to 272 residues: NADPH-dependent 7-cyano-7-deazaguanine reductase (272 aa).

Residue 82 to 84 coordinates substrate; that stretch reads IES. Residue 84–85 participates in NADPH binding; that stretch reads SK. Cys178 serves as the catalytic Thioimide intermediate. The active-site Proton donor is Asp185. 217–218 lines the substrate pocket; the sequence is HE. Residue 246-247 participates in NADPH binding; sequence RG.

The protein belongs to the GTP cyclohydrolase I family. QueF type 2 subfamily. As to quaternary structure, homodimer.

It is found in the cytoplasm. It catalyses the reaction 7-aminomethyl-7-carbaguanine + 2 NADP(+) = 7-cyano-7-deazaguanine + 2 NADPH + 3 H(+). It functions in the pathway tRNA modification; tRNA-queuosine biosynthesis. Its function is as follows. Catalyzes the NADPH-dependent reduction of 7-cyano-7-deazaguanine (preQ0) to 7-aminomethyl-7-deazaguanine (preQ1). In Stenotrophomonas maltophilia (strain K279a), this protein is NADPH-dependent 7-cyano-7-deazaguanine reductase.